A 277-amino-acid polypeptide reads, in one-letter code: Outer membrane lipoprotein 1 (277 aa).

The first 19 residues, 1–19, serve as a signal peptide directing secretion; that stretch reads MSFKKILGVALVSALALTA. The N-palmitoyl cysteine moiety is linked to residue Cys20. A lipid anchor (S-diacylglycerol cysteine) is attached at Cys20.

The protein belongs to the NlpA lipoprotein family.

It localises to the cell outer membrane. The protein is Outer membrane lipoprotein 1 (plpA) of Mannheimia haemolytica (Pasteurella haemolytica).